Reading from the N-terminus, the 151-residue chain is Small ribosomal subunit protein bS6 (151 aa).

Positions 97–151 are disordered; it reads EAEPSAMMQKRDRDDRKDRDRGDRPRRRDDDFGGGDRGDRGDRGDRPERNFGGEN. The span at 105–151 shows a compositional bias: basic and acidic residues; the sequence is QKRDRDDRKDRDRGDRPRRRDDDFGGGDRGDRGDRGDRPERNFGGEN.

Belongs to the bacterial ribosomal protein bS6 family.

Binds together with bS18 to 16S ribosomal RNA. The protein is Small ribosomal subunit protein bS6 of Methylorubrum populi (strain ATCC BAA-705 / NCIMB 13946 / BJ001) (Methylobacterium populi).